Here is a 247-residue protein sequence, read N- to C-terminus: Transmembrane protein 33 (247 aa).

Alanine 2 is subject to N-acetylalanine. Over 2–31 (ADTTPNGPQGAGAVQFMMTNKLDTAMWLSR) the chain is Lumenal. Residues 32 to 52 (LFTVYCSALFVLPLLGLHEAA) form a helical membrane-spanning segment. Residues 53–100 (SFYQRALLANALTSALRLHQRLPHFQLSRAFLAQALLEDSCHYLLYSL) are Cytoplasmic-facing. A helical transmembrane segment spans residues 101–121 (IFVNSYPVTMSIFPVLLFSLL). The Lumenal portion of the chain corresponds to 122–155 (HAATYTKKVLDAKGSNSLPLLRSVLDKLSTNQQN). Residues 156 to 176 (ILKFIACNEIFLMPATVFMLF) form a helical membrane-spanning segment. The Cytoplasmic segment spans residues 177-247 (SGQGSLLQPF…FISRLAPTVA (71 aa)).

This sequence belongs to the PER33/POM33 family. In terms of assembly, interacts with EIF2AK3. Interacts with ARL6IP1, isoform RTN1-A of RTN1, isoform RTN2-B of RTN2, isoform 3 of RTN3 and isoform 3 of RTN4. Interacts with RNF5. Interacts with RNF26. Interacts with PKD2. In terms of tissue distribution, highly expressed in the liver and significantly in brain, lungs and kidneys.

It is found in the endoplasmic reticulum membrane. It localises to the melanosome. The protein localises to the nucleus envelope. Functionally, acts as a regulator of the tubular endoplasmic reticulum (ER) network by modulating intracellular calcium homeostasis. Mechanistically, stimulates PKD2 calcium-dependent activity. Suppresses the RTN3/4-induced formation of the ER tubules. Positively regulates PERK-mediated and IRE1-mediated unfolded protein response signaling. Plays an essential role in VEGF-mediated release of Ca(2+) from ER stores during angiogenesis. Also plays a role in the modulation of innate immune signaling through the cGAS-STING pathway by interacting with RNF26. Participates in lipid metabolism by acting as a downstream effector of the pyruvate kinase/PKM. Forms a complex with RNF5 to facilitate polyubiquitination and subsequent degradation of SCAP on the ER membrane. This Rattus norvegicus (Rat) protein is Transmembrane protein 33 (Tmem33).